The chain runs to 107 residues: uncharacterized protein (107 aa).

The next 2 membrane-spanning stretches (helical) occupy residues 14–34 (YLAE…IVAW) and 68–88 (FFVF…LVPI).

Its subcellular location is the cell membrane. This is an uncharacterized protein from Haemophilus influenzae (strain ATCC 51907 / DSM 11121 / KW20 / Rd).